The primary structure comprises 294 residues: tRNA dimethylallyltransferase (294 aa).

An ATP-binding site is contributed by 11–18; the sequence is GPTAVGKT. 13-18 is a binding site for substrate; sequence TAVGKT. Residues 36–39 are interaction with substrate tRNA; the sequence is DSQQ.

It belongs to the IPP transferase family. Monomer. Mg(2+) is required as a cofactor.

It catalyses the reaction adenosine(37) in tRNA + dimethylallyl diphosphate = N(6)-dimethylallyladenosine(37) in tRNA + diphosphate. Catalyzes the transfer of a dimethylallyl group onto the adenine at position 37 in tRNAs that read codons beginning with uridine, leading to the formation of N6-(dimethylallyl)adenosine (i(6)A). This chain is tRNA dimethylallyltransferase, found in Lactococcus lactis subsp. cremoris (strain SK11).